The primary structure comprises 237 residues: 2-C-methyl-D-erythritol 4-phosphate cytidylyltransferase (237 aa).

Belongs to the IspD/TarI cytidylyltransferase family. IspD subfamily.

It catalyses the reaction 2-C-methyl-D-erythritol 4-phosphate + CTP + H(+) = 4-CDP-2-C-methyl-D-erythritol + diphosphate. It functions in the pathway isoprenoid biosynthesis; isopentenyl diphosphate biosynthesis via DXP pathway; isopentenyl diphosphate from 1-deoxy-D-xylulose 5-phosphate: step 2/6. Functionally, catalyzes the formation of 4-diphosphocytidyl-2-C-methyl-D-erythritol from CTP and 2-C-methyl-D-erythritol 4-phosphate (MEP). This Acaryochloris marina (strain MBIC 11017) protein is 2-C-methyl-D-erythritol 4-phosphate cytidylyltransferase.